The following is a 92-amino-acid chain: Large ribosomal subunit protein eL43 (92 aa).

Zn(2+)-binding residues include Cys39, Cys42, Cys57, and Cys60. The segment at 39–60 adopts a C4-type zinc-finger fold; it reads CPVCGFPKLKRASTSIWVCGKC.

It belongs to the eukaryotic ribosomal protein eL43 family. Putative zinc-binding subfamily. Part of the 50S ribosomal subunit. Zn(2+) is required as a cofactor.

In terms of biological role, binds to the 23S rRNA. The chain is Large ribosomal subunit protein eL43 from Methanocaldococcus jannaschii (strain ATCC 43067 / DSM 2661 / JAL-1 / JCM 10045 / NBRC 100440) (Methanococcus jannaschii).